A 432-amino-acid polypeptide reads, in one-letter code: MTTEIMQISLSHNPADARWGEKALISTNDQGVTIHLTSHDQLGGIQRAARKIDGQGIKQVKLAGEGWGLEQSWAFWQGFRGPKGQRSVVWAELPANEKTELEQRLKIIDWVRDTINAPAEDLGPEQLAKNAIDLLCAVSCDAVSYRITKGEDLREQNYAGIYTVGRGSDRAPVLLALDYNPTGNPDAPVMACLVGKGITFDSGGYSLKQSAFMDSMKSDMGGAATLTGALALAAARGLKERVKLYLCCADNMVSGNAFKLGDIIRYRNGKTVEIMNTDAEGRLVLADGLIDASEQNAPLIIDAATLTGAAKTALGNDYHALFSFDDELAQALLNSAHSEHELFWRLPLAEFHRSQLPSNFAELNNVAGGAYSAGASTAAAFLSHFVKNYQQGWLHIDCSATYRKSAVDQWSAGATGLGVRTVANLLLAQAKQ.

Positions 196 and 201 each coordinate Mn(2+). Residue Lys208 is part of the active site. 3 residues coordinate Mn(2+): Asp219, Asp278, and Glu280. The active site involves Arg282.

Belongs to the peptidase M17 family. As to quaternary structure, homohexamer. Mn(2+) serves as cofactor.

The protein localises to the cytoplasm. The catalysed reaction is Release of an N-terminal amino acid, Xaa, from a peptide or arylamide. Xaa is preferably Glu or Asp but may be other amino acids, including Leu, Met, His, Cys and Gln.. Probably plays an important role in intracellular peptide degradation. The chain is Peptidase B from Yersinia pestis bv. Antiqua (strain Antiqua).